The chain runs to 303 residues: Coenzyme PQQ synthesis protein B (303 aa).

The protein belongs to the PqqB family.

The protein operates within cofactor biosynthesis; pyrroloquinoline quinone biosynthesis. Its function is as follows. May be involved in the transport of PQQ or its precursor to the periplasm. This chain is Coenzyme PQQ synthesis protein B, found in Pseudomonas fluorescens (strain SBW25).